The chain runs to 626 residues: Protein ALEX (626 aa).

Disordered regions lie at residues 1-29 (MMAR…LEPM), 173-223 (TTAH…AAHP), 236-473 (AAPG…APRS), and 556-612 (AASV…NNSR). Composition is skewed to polar residues over residues 186–195 (KSTAAASSRQ) and 255–270 (GSTT…QSRL). Basic and acidic residues predominate over residues 281 to 312 (QIRESEQRDPQLRRKQQRWKEPLMPRREEKYP). A compositionally biased stretch (low complexity) spans 337–346 (QPILTPGQPQ). The segment covering 366 to 399 (IPTPGQPLPPQPIPTPGRPLTPQPIPTPGRPLTP) has biased composition (pro residues). The segment covering 416–435 (RLLRPGQPMSPQLRQTQGLP) has biased composition (low complexity). The segment covering 436–445 (LPQPLLPPGQ) has biased composition (pro residues). Basic residues predominate over residues 570-579 (ALSRSRRYPW). Positions 600-611 (RRNAVSSSTNNS) are enriched in polar residues.

This sequence belongs to the ALEX family. In terms of assembly, interacts with the N-terminal region of the XLas isoforms of guanine nucleotide-binding protein G(s) subunit alpha.

The protein resides in the cell membrane. Its subcellular location is the cell projection. The protein localises to the ruffle. In terms of biological role, may inhibit the adenylyl cyclase-stimulating activity of guanine nucleotide-binding protein G(s) subunit alpha which is produced from the same locus in a different open reading frame. The sequence is that of Protein ALEX from Homo sapiens (Human).